A 292-amino-acid chain; its full sequence is Elongation factor Ts (292 aa).

Residues 79–82 (TDFV) are involved in Mg(2+) ion dislocation from EF-Tu.

This sequence belongs to the EF-Ts family.

The protein resides in the cytoplasm. Functionally, associates with the EF-Tu.GDP complex and induces the exchange of GDP to GTP. It remains bound to the aminoacyl-tRNA.EF-Tu.GTP complex up to the GTP hydrolysis stage on the ribosome. The sequence is that of Elongation factor Ts from Malacoplasma penetrans (strain HF-2) (Mycoplasma penetrans).